The following is a 159-amino-acid chain: Probable RNA-binding protein EIF1AD (159 aa).

The S1-like domain occupies 18-93 (MMEDDYALPT…VKAEICKILT (76 aa)). Residues 109 to 159 (KFTKKPVQEEATSQNKDDSDFEDDLLPNTNRPVNRDSSDEEEDEETSSEED) form a disordered region. A compositionally biased stretch (acidic residues) spans 146–159 (SDEEEDEETSSEED).

Belongs to the EIF1AD family.

The chain is Probable RNA-binding protein EIF1AD from Drosophila melanogaster (Fruit fly).